The primary structure comprises 378 residues: Coiled-coil domain-containing protein 74A (378 aa).

3 disordered regions span residues 1-52, 128-211, and 301-328; these read MSGA…RNLD, GGPS…EEPL, and EGSQRPQAAPEEASFPRDQEATHFPKVS. Over residues 34 to 44 the composition is skewed to polar residues; that stretch reads LRPQSPQLRQS. The stretch at 47–90 forms a coiled coil; sequence QKRNLDLEKSLQFLQQQHSEMLAKLHEEIEHLKRENKDLHYKLI. A compositionally biased stretch (basic residues) spans 141–151; that stretch reads RTHRPGGKRGR. Positions 165-182 are enriched in polar residues; the sequence is DSLSMSSFQSVKSISNSG. Basic and acidic residues-rich tracts occupy residues 194–205 and 314–323; these read QDSKADVSQKAD and SFPRDQEATH.

The chain is Coiled-coil domain-containing protein 74A (CCDC74A) from Homo sapiens (Human).